Reading from the N-terminus, the 430-residue chain is Tyrosine--tRNA ligase (430 aa).

Tyr32 lines the L-tyrosine pocket. The short motif at 37–46 is the 'HIGH' region element; it reads PTADSLHIGH. Tyr172 and Gln176 together coordinate L-tyrosine. Positions 232 to 236 match the 'KMSKS' region motif; sequence KFGKT. Residue Lys235 participates in ATP binding. The region spanning 362 to 429 is the S4 RNA-binding domain; it reads VKAVDLFVDN…GKKNYYLIIA (68 aa).

It belongs to the class-I aminoacyl-tRNA synthetase family. TyrS type 1 subfamily. As to quaternary structure, homodimer.

The protein resides in the cytoplasm. It catalyses the reaction tRNA(Tyr) + L-tyrosine + ATP = L-tyrosyl-tRNA(Tyr) + AMP + diphosphate + H(+). Its function is as follows. Catalyzes the attachment of tyrosine to tRNA(Tyr) in a two-step reaction: tyrosine is first activated by ATP to form Tyr-AMP and then transferred to the acceptor end of tRNA(Tyr). The sequence is that of Tyrosine--tRNA ligase from Bacteroides fragilis (strain ATCC 25285 / DSM 2151 / CCUG 4856 / JCM 11019 / LMG 10263 / NCTC 9343 / Onslow / VPI 2553 / EN-2).